The sequence spans 257 residues: Expansin-A10 (257 aa).

An N-terminal signal peptide occupies residues 1-18 (MAPCLLLVLFLLPALATG). The region spanning 50-163 (GGACGFGDLG…RRVNCLRDGG (114 aa)) is the Expansin-like EG45 domain. The Expansin-like CBD domain maps to 173-252 (FFLTVLISNV…EWDFGKTYTG (80 aa)).

It belongs to the expansin family. Expansin A subfamily. In terms of tissue distribution, expressed in panicles and flowers.

It localises to the secreted. Its subcellular location is the cell wall. It is found in the membrane. In terms of biological role, may cause loosening and extension of plant cell walls by disrupting non-covalent bonding between cellulose microfibrils and matrix glucans. No enzymatic activity has been found. May be required for rapid internodal elongation in deepwater rice during submergence. The polypeptide is Expansin-A10 (EXPA10) (Oryza sativa subsp. japonica (Rice)).